The sequence spans 340 residues: Guanine nucleotide-binding protein subunit beta-4 (340 aa).

Residue Ser-2 is modified to N-acetylserine. A Phosphoserine modification is found at Ser-2. 5 WD repeats span residues 53–92 (GHLAKIYAMHWGYDSRLLVSASQDGKLIIWDSYTTNKMHA), 95–134 (LRSSWVMTCAYAPSGNYVACGGLDNICSIYNLKTREGNVR), 141–179 (GHTGYLSCCRFLDDGQIITSSGDTTCALWDIETGQQTTT), 182–221 (GHSGDVMSLSLSPDLKTFVSGACDASSKLWDIRDGMCRQS), and 224–263 (GHISDINAVSFFPSGYAFATGSDDATCRLFDLRADQELLL). His-266 carries the phosphohistidine modification. WD repeat units follow at residues 268–307 (NIICGITSVAFSKSGRLLLAGYDDFNCSVWDALKGGRAGV) and 310–339 (GHDNRVSCLGVTDDGMAVATGSWDSFLRIW).

Belongs to the WD repeat G protein beta family. In terms of assembly, g proteins are composed of 3 units, alpha, beta and gamma. Widely expressed in the brain. Highest levels found in the hippocampus and layers v and vi of the neocortex.

Its function is as follows. Guanine nucleotide-binding proteins (G proteins) are involved as a modulator or transducer in various transmembrane signaling systems. The beta and gamma chains are required for the GTPase activity, for replacement of GDP by GTP, and for G protein-effector interaction. The polypeptide is Guanine nucleotide-binding protein subunit beta-4 (Gnb4) (Rattus norvegicus (Rat)).